The chain runs to 172 residues: MERAAKKEAVDALKGTFQSTGVAIVAHYSGLTVAQMQTLRTQMKQAGASVKVSKNRLAKIALEGTDVASIGSLLKGPTVIATSNDPVAAPKIAVEFAKTNEQFVILGGAMGTTVLNPDAVKALASLPSLDELRAKIIGLLVAPATKIAQLTNAPAAKVARVVQAYASKGEAA.

It belongs to the universal ribosomal protein uL10 family. As to quaternary structure, part of the ribosomal stalk of the 50S ribosomal subunit. The N-terminus interacts with L11 and the large rRNA to form the base of the stalk. The C-terminus forms an elongated spine to which L12 dimers bind in a sequential fashion forming a multimeric L10(L12)X complex.

Forms part of the ribosomal stalk, playing a central role in the interaction of the ribosome with GTP-bound translation factors. This is Large ribosomal subunit protein uL10 from Afipia carboxidovorans (strain ATCC 49405 / DSM 1227 / KCTC 32145 / OM5) (Oligotropha carboxidovorans).